The following is a 655-amino-acid chain: Putative calcium up-regulated protein J (655 aa).

Residues K40–E181 enclose the Ricin B-type lectin domain.

The protein belongs to the cup family.

The protein is Putative calcium up-regulated protein J (cupJ) of Dictyostelium discoideum (Social amoeba).